The chain runs to 245 residues: Eukaryotic translation initiation factor 3 subunit K (245 aa).

The PCI domain occupies 46-227; it reads YDCYANLALL…EAKGTVVREN (182 aa).

It belongs to the eIF-3 subunit K family. As to quaternary structure, component of the eukaryotic translation initiation factor 3 (eIF-3) complex.

It localises to the cytoplasm. In terms of biological role, component of the eukaryotic translation initiation factor 3 (eIF-3) complex, which is involved in protein synthesis of a specialized repertoire of mRNAs and, together with other initiation factors, stimulates binding of mRNA and methionyl-tRNAi to the 40S ribosome. The eIF-3 complex specifically targets and initiates translation of a subset of mRNAs involved in cell proliferation. The chain is Eukaryotic translation initiation factor 3 subunit K from Sclerotinia sclerotiorum (strain ATCC 18683 / 1980 / Ss-1) (White mold).